Consider the following 184-residue polypeptide: Adenine phosphoribosyltransferase (184 aa).

This sequence belongs to the purine/pyrimidine phosphoribosyltransferase family. As to quaternary structure, homodimer.

It is found in the cytoplasm. The catalysed reaction is AMP + diphosphate = 5-phospho-alpha-D-ribose 1-diphosphate + adenine. It participates in purine metabolism; AMP biosynthesis via salvage pathway; AMP from adenine: step 1/1. Functionally, catalyzes a salvage reaction resulting in the formation of AMP, that is energically less costly than de novo synthesis. In Sphingopyxis alaskensis (strain DSM 13593 / LMG 18877 / RB2256) (Sphingomonas alaskensis), this protein is Adenine phosphoribosyltransferase.